A 78-amino-acid polypeptide reads, in one-letter code: Delta-conotoxin-like CVIE (78 aa).

Residues 1–22 form the signal peptide; that stretch reads MKLTCMMIVAVLFLTAWTFVTA. The propeptide occupies 23-49; sequence DDSRNGLKNLFPKARHEMKNPEASKLN. Cystine bridges form between C54–C69, C61–C73, and C68–C77. P65 carries the post-translational modification 4-hydroxyproline.

The protein belongs to the conotoxin O1 superfamily. As to expression, expressed by the venom duct.

Its subcellular location is the secreted. Delta-conotoxins bind to site 6 of voltage-gated sodium channels (Nav) and inhibit the inactivation process. The protein is Delta-conotoxin-like CVIE of Conus catus (Cat cone).